The primary structure comprises 550 residues: Solute carrier family 22 member 11 (550 aa).

The Cytoplasmic segment spans residues 1–10 (MAFSKLLEQA). A helical transmembrane segment spans residues 11-31 (GGVGLFQTLQVLTFILPCLMI). Residues 32–142 (PSQMLLENFS…DLVCSSQGLK (111 aa)) lie on the Extracellular side of the membrane. 3 N-linked (GlcNAc...) asparagine glycosylation sites follow: asparagine 39, asparagine 56, and asparagine 99. Residues 143–163 (PLSQSIFMSGILVGSFIWGLL) traverse the membrane as a helical segment. Residues 164-174 (SYRFGRKPMLS) lie on the Cytoplasmic side of the membrane. A helical transmembrane segment spans residues 175–195 (WCCLQLAVAGTSTIFAPTFVI). The Extracellular segment spans residues 196-200 (YCGLR). Residues 201–221 (FVAAFGMAGIFLSSLTLMVEW) form a helical membrane-spanning segment. Residues 222-231 (TTTSRRAVTM) are Cytoplasmic-facing. Residues 232 to 252 (TVVGCAFSAGQAALGGLAFAL) traverse the membrane as a helical segment. The Extracellular portion of the chain corresponds to 253-256 (RDWR). The chain crosses the membrane as a helical span at residues 257 to 277 (TLQLAASVPFFAISLISWWLP). At 278 to 346 (ESARWLIIKG…FCVPVLRWRS (69 aa)) the chain is on the cytoplasmic side. A helical membrane pass occupies residues 347 to 367 (CAMLVVNFSLLISYYGLVFDL). Over 368-378 (QSLGRDIFLLQ) the chain is Extracellular. A helical membrane pass occupies residues 379-399 (ALFGAVDFLGRATTALLLSFL). The Cytoplasmic segment spans residues 400-402 (GRR). Residues 403–423 (TIQAGSQAMAGLAILANMLVP) traverse the membrane as a helical segment. Topologically, residues 424-430 (QDLQTLR) are extracellular. Residues 431–451 (VVFAVLGKGCFGISLTCLTIY) form a helical membrane-spanning segment. Over 452–463 (KAELFPTPVRMT) the chain is Cytoplasmic. Residues 464–484 (ADGILHTVGRLGAMMGPLILM) traverse the membrane as a helical segment. The Extracellular portion of the chain corresponds to 485-490 (SRQALP). The helical transmembrane segment at 491 to 511 (LLPPLLYGVISIASSLVVLFF) threads the bilayer. The Cytoplasmic segment spans residues 512–550 (LPETQGLPLPDTIQDLESQKSTAAQGNRQEAVTVESTSL). Residues 531–550 (KSTAAQGNRQEAVTVESTSL) are disordered.

This sequence belongs to the major facilitator (TC 2.A.1) superfamily. Organic cation transporter (TC 2.A.1.19) family. N-glycosylated. Contains several complex-type N-glycans. Expressed in placental trophoblasts, syncytiotrophoblast and cytotrophoblast. Also located in the proximal tubules in kidneys.

It localises to the cell membrane. The protein localises to the apical cell membrane. The protein resides in the basal cell membrane. It carries out the reaction estrone 3-sulfate(out) + glutarate(in) = estrone 3-sulfate(in) + glutarate(out). The enzyme catalyses dehydroepiandrosterone 3-sulfate(out) = dehydroepiandrosterone 3-sulfate(in). The catalysed reaction is prostaglandin F2alpha(out) = prostaglandin F2alpha(in). It catalyses the reaction prostaglandin E2(out) = prostaglandin E2(in). Antiporter that mediates the transport of conjugated steroids and other specific organic anions at the basal membrane of syncytiotrophoblast and at the apical membrane of proximal tubule epithelial cells, in exchange for anionic compounds. May be responsible for placental absorption of fetal-derived steroid sulfates such as estrone sulfate (E1S) and the steroid hormone precursor dehydroepiandrosterone sulfate (DHEA-S), as well as clearing waste products and xenobiotics from the fetus. Maybe also be involved in placental urate homeostasis. Facilitates the renal reabsorption of organic anions such as urate and derived steroid sulfates. Organic anion glutarate acts as conteranion for E1S renal uptake. Possible transport mode may also include DHEA-S/E1S exchange. Also interacts with inorganic anions such as chloride and hydroxyl ions, therefore possible transport modes may include E1S/Cl(-), E1S/OH(-), urate/Cl(-) and urate/OH(-). Also mediates the transport of prostaglandin E2 (PGE2) and prostaglandin F2-alpha (PGF2-alpha) and may be involved in their renal excretion. Also able to uptake anionic drugs, diuretics, bile salts and ochratoxin A. Mediates the unidirectional efflux of glutamate and aspartate. Glutamate efflux down its transmembrane gradient may drive SLC22A11/OAT4-mediated placental uptake of E1S. The protein is Solute carrier family 22 member 11 of Homo sapiens (Human).